Here is a 410-residue protein sequence, read N- to C-terminus: Serine/threonine transporter SstT (410 aa).

The next 9 helical transmembrane spans lie at 11–31 (VSLV…AVTV), 45–65 (FVGA…ISAI), 79–99 (ILIL…VASF), 138–158 (ALLN…GIAL), 179–199 (IVTW…FDAI), 214–234 (LAVL…LIVF), 285–305 (ISIP…ISVL), 327–347 (VLSA…LLLI), and 353–373 (LFGI…IIGV).

Belongs to the dicarboxylate/amino acid:cation symporter (DAACS) (TC 2.A.23) family.

It localises to the cell membrane. It carries out the reaction L-serine(in) + Na(+)(in) = L-serine(out) + Na(+)(out). The enzyme catalyses L-threonine(in) + Na(+)(in) = L-threonine(out) + Na(+)(out). Functionally, involved in the import of serine and threonine into the cell, with the concomitant import of sodium (symport system). The chain is Serine/threonine transporter SstT from Geobacillus thermodenitrificans (strain NG80-2).